The primary structure comprises 248 residues: Large ribosomal subunit protein uL30 (248 aa).

Positions 22 to 42 (KSQEKARAERQAEIEKKKAAN) are disordered. Residues 24–42 (QEKARAERQAEIEKKKAAN) show a composition bias toward basic and acidic residues.

This sequence belongs to the universal ribosomal protein uL30 family. As to quaternary structure, component of the large ribosomal subunit (LSU). Mature N.crassa ribosomes consist of a small (40S) and a large (60S) subunit. The 40S small subunit contains 1 molecule of ribosomal RNA (18S rRNA) and at least 32 different proteins. The large 60S subunit contains 3 rRNA molecules (26S, 5.8S and 5S rRNA) and at least 42 different proteins.

The protein resides in the cytoplasm. Component of the ribosome, a large ribonucleoprotein complex responsible for the synthesis of proteins in the cell. The small ribosomal subunit (SSU) binds messenger RNAs (mRNAs) and translates the encoded message by selecting cognate aminoacyl-transfer RNA (tRNA) molecules. The large subunit (LSU) contains the ribosomal catalytic site termed the peptidyl transferase center (PTC), which catalyzes the formation of peptide bonds, thereby polymerizing the amino acids delivered by tRNAs into a polypeptide chain. The nascent polypeptides leave the ribosome through a tunnel in the LSU and interact with protein factors that function in enzymatic processing, targeting, and the membrane insertion of nascent chains at the exit of the ribosomal tunnel. The sequence is that of Large ribosomal subunit protein uL30 (rpl-7) from Neurospora crassa (strain ATCC 24698 / 74-OR23-1A / CBS 708.71 / DSM 1257 / FGSC 987).